A 163-amino-acid chain; its full sequence is Protein YtsP (163 aa).

Belongs to the free Met sulfoxide reductase family.

The sequence is that of Protein YtsP (ytsP) from Bacillus subtilis (strain 168).